We begin with the raw amino-acid sequence, 593 residues long: Aspartate--tRNA ligase (593 aa).

Position 180 (Glu-180) interacts with L-aspartate. The tract at residues 204–207 (QIFK) is aspartate. Arg-226 contacts L-aspartate. Residues 226-228 (RDE) and Gln-235 each bind ATP. Residue His-453 coordinates L-aspartate. Glu-487 contacts ATP. Arg-494 lines the L-aspartate pocket. 539–542 (GLDR) contacts ATP.

Belongs to the class-II aminoacyl-tRNA synthetase family. Type 1 subfamily. Homodimer.

It localises to the cytoplasm. It carries out the reaction tRNA(Asp) + L-aspartate + ATP = L-aspartyl-tRNA(Asp) + AMP + diphosphate. Functionally, catalyzes the attachment of L-aspartate to tRNA(Asp) in a two-step reaction: L-aspartate is first activated by ATP to form Asp-AMP and then transferred to the acceptor end of tRNA(Asp). This Clostridium botulinum (strain ATCC 19397 / Type A) protein is Aspartate--tRNA ligase.